Reading from the N-terminus, the 295-residue chain is Ethanolamine ammonia-lyase small subunit (295 aa).

The adenosylcob(III)alamin site is built by Val-207, Glu-228, and Cys-258.

The protein belongs to the EutC family. In terms of assembly, the basic unit is a heterodimer which dimerizes to form tetramers. The heterotetramers trimerize; 6 large subunits form a core ring with 6 small subunits projecting outwards. The cofactor is adenosylcob(III)alamin.

The protein resides in the bacterial microcompartment. It catalyses the reaction ethanolamine = acetaldehyde + NH4(+). The protein operates within amine and polyamine degradation; ethanolamine degradation. In terms of biological role, catalyzes the deamination of various vicinal amino-alcohols to oxo compounds. Allows this organism to utilize ethanolamine as the sole source of nitrogen and carbon in the presence of external vitamin B12. This Escherichia coli O139:H28 (strain E24377A / ETEC) protein is Ethanolamine ammonia-lyase small subunit.